The chain runs to 219 residues: Protein OPG170 (219 aa).

Positions 1-16 (MYSLLFIILMCIPFSF) are cleaved as a signal peptide. A glycan (N-linked (GlcNAc...) asparagine; by host) is linked at N70.

This sequence belongs to the orthopoxvirus OPG170 family.

Its subcellular location is the secreted. In terms of biological role, may interact with several cellular chemokines to interfere with chemokine-glycosaminoglycan (GAG) interactions at the cell surface to alter chemotaxis of nearby responsive cells. The sequence is that of Protein OPG170 (OPG170) from Vaccinia virus (strain Copenhagen) (VACV).